A 181-amino-acid chain; its full sequence is Major urinary protein 20 (181 aa).

The signal sequence occupies residues 1 to 19 (MKLLVLLLCLGLTLVCVHA). Cysteines 83 and 176 form a disulfide.

This sequence belongs to the calycin superfamily. Lipocalin family. As to expression, detected in urine of males but absent from female urine (at protein level).

Its subcellular location is the secreted. Its function is as follows. Male pheromone which stimulates female sexual attraction to male urinary scent and promotes a strong learned attraction to the airborne urinary odor of an individual male. Promotes spatial learning by rapidly conditioning preference for its remembered location among females and competitor males so that animals prefer to spend time in the site even when scent is absent. In addition to promoting a rapid attraction response, also elicits ultrasonic vocalizations and urinary scent marking in females which do not occur immediately after exposure. Stimulates hippocampal neurogenesis and cell proliferation in the subventricular zone in females. Promotes male aggressive behavior. Response to Mup20 is mediated by a neural circuit extending from the accessory olfactory bulb to a subset of nitric oxidase synthase-expressing neurons in the medial amygdala. As well as acting as a pheromone itself, binds most of the male pheromone, 2-sec-butyl-4,5-dihydrothiazole, in urine and is responsible for its slow release from scent marks. In Mus musculus (Mouse), this protein is Major urinary protein 20.